Here is a 401-residue protein sequence, read N- to C-terminus: tRNA (guanine-N(7)-)-methyltransferase non-catalytic subunit wuho (401 aa).

The tract at residues 45–85 (KGRPRKYFDADSDSDEEQQNGDEPGTGKNNGGGDTGKKDQD) is disordered. The segment covering 54–64 (ADSDSDEEQQN) has biased composition (acidic residues). WD repeat units follow at residues 86–125 (DQTN…RTLK), 174–213 (GHMS…NIET), and 217–255 (GHTE…ELAR).

Belongs to the WD repeat TRM82 family. Forms a heterodimer with the catalytic subunit.

It is found in the nucleus. It participates in tRNA modification; N(7)-methylguanine-tRNA biosynthesis. In terms of biological role, required for the formation of N(7)-methylguanine at position 46 (m7G46) in tRNA. In the complex, it is required to stabilize and induce conformational changes of the catalytic subunit. The chain is tRNA (guanine-N(7)-)-methyltransferase non-catalytic subunit wuho from Culex quinquefasciatus (Southern house mosquito).